The primary structure comprises 95 residues: Small ribosomal subunit protein uS19 (95 aa).

Belongs to the universal ribosomal protein uS19 family.

Its function is as follows. Protein S19 forms a complex with S13 that binds strongly to the 16S ribosomal RNA. The chain is Small ribosomal subunit protein uS19 from Syntrophobacter fumaroxidans (strain DSM 10017 / MPOB).